We begin with the raw amino-acid sequence, 787 residues long: Glutamine-dependent NAD(+) synthetase (787 aa).

Residues 5 to 275 enclose the CN hydrolase domain; the sequence is VTVAVSTLNQ…VEVTLATIDL (271 aa). Glu45 functions as the Proton acceptor; for glutaminase activity in the catalytic mechanism. The active-site For glutaminase activity is Lys114. Cys175 acts as the Nucleophile; for glutaminase activity in catalysis. Residues 325–787 form a ligase region; the sequence is MHTPEEEIAL…KIKDRTGIPV (463 aa). 355–362 provides a ligand contact to ATP; sequence PLSGGVDS. Ser357 is an active-site residue. Ser703 carries the phosphoserine modification.

In the C-terminal section; belongs to the NAD synthetase family.

The catalysed reaction is deamido-NAD(+) + L-glutamine + ATP + H2O = L-glutamate + AMP + diphosphate + NAD(+) + H(+). It participates in cofactor biosynthesis; NAD(+) biosynthesis; NAD(+) from deamido-NAD(+) (L-Gln route): step 1/1. Functionally, catalyzes the ATP-dependent amidation of deamido-NAD to form NAD. Uses L-glutamine as a nitrogen source. Because of its role in energy metabolism, involved in the modulation of aged-related cardiac function, mobility, and lifespan. This chain is Glutamine-dependent NAD(+) synthetase, found in Drosophila melanogaster (Fruit fly).